The primary structure comprises 246 residues: UDP-N-acetyl-D-mannosaminuronic acid transferase (246 aa).

The protein belongs to the glycosyltransferase 26 family.

The enzyme catalyses UDP-N-acetyl-alpha-D-mannosaminouronate + N-acetyl-alpha-D-glucosaminyl-di-trans,octa-cis-undecaprenyl diphosphate = beta-D-ManNAcA-(1-&gt;4)-alpha-D-GlcNAc-di-trans,octa-cis-undecaprenyl diphosphate + UDP + H(+). It participates in bacterial outer membrane biogenesis; enterobacterial common antigen biosynthesis. Catalyzes the synthesis of Und-PP-GlcNAc-ManNAcA (Lipid II), the second lipid-linked intermediate involved in enterobacterial common antigen (ECA) synthesis. The polypeptide is UDP-N-acetyl-D-mannosaminuronic acid transferase (Escherichia coli O157:H7).